We begin with the raw amino-acid sequence, 260 residues long: Late transcription factor 1 (260 aa).

The protein belongs to the chordopoxvirinae VLTF-1 family. In terms of assembly, interacts with the late transcription factors VLTF-2 and VLTF-3. Interacts with the late transcription elongation factor VLTF-4. Interacts with itself.

Functionally, associates with RNA polymerase to initiate transcription from late gene promoters. This Homo sapiens (Human) protein is Late transcription factor 1 (OPG093).